A 356-amino-acid polypeptide reads, in one-letter code: MFNLCYKGQKLQRIVQSKRMEEPYFTFGIIADIQYADKDNRLNYLKTSMRYYRNSLTQLKVAIKEWATESIKPKFILQLGDIIDGVNTKDNSSTIALERVLEEMDKLPIQFHHVWGNHEFYNFSREYLNGSKLNSRARENRIDQQVGTSESGETNDESFYAYHFSPFPKFRFLLIDGYDLSPIGREKTSLKYDISFNLLKEKNPNEDLNSPTGLEEEQFVLFNGGISPSQLDWIQSILTSSDKKEEKVFVVSHLPVHPDAADTMCLIWNYPEVLSMLQSHPCVVGYLAGHNHEGRYCMDPSGIHHMTFSGVIETPPESQAFGTMYVYEDKMVLKGRGLVEDRTLHYRDPKNMQVGH.

The Zn(2+) site is built by Asp-32, Gln-34, Asp-81, Asn-117, His-253, His-290, and His-292.

It belongs to the ADPRibase-Mn family. Monomer. Mg(2+) serves as cofactor.

It carries out the reaction CDP-choline + H2O = phosphocholine + CMP + 2 H(+). The enzyme catalyses ADP-D-ribose + H2O = D-ribose 5-phosphate + AMP + 2 H(+). It catalyses the reaction CDP-glycerol + H2O = sn-glycerol 3-phosphate + CMP + 2 H(+). Hydrolyzes ADP-ribose, IDP-ribose, CDP-glycerol, CDP-choline and CDP-ethanolamine, but not other non-reducing ADP-sugars or CDP-glucose. This chain is Manganese-dependent ADP-ribose/CDP-alcohol diphosphatase (adprm), found in Xenopus laevis (African clawed frog).